We begin with the raw amino-acid sequence, 489 residues long: N-succinylglutamate 5-semialdehyde dehydrogenase (489 aa).

223-228 lines the NAD(+) pocket; sequence GSSNTG. Active-site residues include E246 and C280.

It belongs to the aldehyde dehydrogenase family. AstD subfamily.

The enzyme catalyses N-succinyl-L-glutamate 5-semialdehyde + NAD(+) + H2O = N-succinyl-L-glutamate + NADH + 2 H(+). Its pathway is amino-acid degradation; L-arginine degradation via AST pathway; L-glutamate and succinate from L-arginine: step 4/5. Catalyzes the NAD-dependent reduction of succinylglutamate semialdehyde into succinylglutamate. The polypeptide is N-succinylglutamate 5-semialdehyde dehydrogenase (Idiomarina loihiensis (strain ATCC BAA-735 / DSM 15497 / L2-TR)).